Here is a 263-residue protein sequence, read N- to C-terminus: Neuferricin (263 aa).

Positions 1–22 (MLRICGLGVVLSLAVAAVAVMA) are cleaved as a signal peptide. The 100-residue stretch at 35–134 (IRLFLPEELA…KNYVFVGRLV (100 aa)) folds into the Cytochrome b5 heme-binding domain. The tract at residues 220 to 249 (VRTTGPPSDQQDNPRHSNHGDLDNPNLEEY) is disordered. The span at 231-241 (DNPRHSNHGDL) shows a compositional bias: basic and acidic residues.

The protein belongs to the cytochrome b5 family. MAPR subfamily. In terms of tissue distribution, expressed in various tissues including brain, heart, adrenal gland, and kidney. In the brain, mainly expressed in pyramidal cells around the CA3 region of Ammon horn in hippocampus. Present in brain (at protein level).

It is found in the secreted. Heme-binding protein which promotes neuronal but not astrocyte differentiation. This chain is Neuferricin, found in Mus musculus (Mouse).